A 239-amino-acid polypeptide reads, in one-letter code: tRNA1(Val) (adenine(37)-N6)-methyltransferase (239 aa).

This sequence belongs to the methyltransferase superfamily. tRNA (adenine-N(6)-)-methyltransferase family.

Its subcellular location is the cytoplasm. It carries out the reaction adenosine(37) in tRNA1(Val) + S-adenosyl-L-methionine = N(6)-methyladenosine(37) in tRNA1(Val) + S-adenosyl-L-homocysteine + H(+). In terms of biological role, specifically methylates the adenine in position 37 of tRNA(1)(Val) (anticodon cmo5UAC). This is tRNA1(Val) (adenine(37)-N6)-methyltransferase from Vibrio campbellii (strain ATCC BAA-1116).